The following is a 614-amino-acid chain: Polyamine transporter 2 (614 aa).

The disordered stretch occupies residues 1–40; that stretch reads MSDQESVVSFNSQNTSMVDVEGQQPQQYVPSKTNSRANQL. The Cytoplasmic portion of the chain corresponds to 1 to 173; that stretch reads MSDQESVVSF…WPSWVRWSYT (173 aa). At serine 50 the chain carries Phosphoserine. Residues 99 to 122 show a composition bias toward polar residues; that stretch reads RTASALSRTRTKQLNRTATNSSST. The tract at residues 99–144 is disordered; sequence RTASALSRTRTKQLNRTATNSSSTGKEEMEEEETEEREDQSGENEL. Residues 126–144 show a composition bias toward acidic residues; sequence EMEEEETEEREDQSGENEL. Residues 174–194 traverse the membrane as a helical segment; the sequence is VLLSILVICVAYGSACISGGL. Residues 195 to 206 lie on the Extracellular side of the membrane; the sequence is GTVEKKYHVGME. The chain crosses the membrane as a helical span at residues 207 to 227; sequence AAILSCSLMVIGFSLGPLIWS. Topologically, residues 228-236 are cytoplasmic; that stretch reads PVSDLYGRR. Residues 237-257 form a helical membrane-spanning segment; the sequence is VAYFVSMGLYVIFNIPCALAP. Over 258-266 the chain is Extracellular; that stretch reads NLGCLLACR. The helical transmembrane segment at 267-287 threads the bilayer; it reads FLCGVWSSSGLCLVGGSIADM. Over 288–297 the chain is Cytoplasmic; the sequence is FPSETRGKAI. Residues 298 to 318 traverse the membrane as a helical segment; the sequence is AFFAFAPYVGPVVGPLVNGFI. At 319-326 the chain is on the extracellular side; sequence SVSTGRMD. Residues 327-347 form a helical membrane-spanning segment; sequence LIFWVNMAFAGVMWIISSAIP. Topologically, residues 348–407 are cytoplasmic; it reads ETYAPVILKRKAARLRKETGNPKIMTEQEAQGVSMSEMMRACLLRPLYFAVTEPVLVATC. Residues 408–428 traverse the membrane as a helical segment; sequence FYVCLIYSLLYAFFFAFPVIF. Topologically, residues 429-437 are extracellular; sequence GELYGYKDN. The helical transmembrane segment at 438 to 458 threads the bilayer; that stretch reads LVGLMFIPIVIGALWALATTF. Residues 459 to 478 are Cytoplasmic-facing; that stretch reads YCENKYLQIVKQRKPTPEDR. A helical transmembrane segment spans residues 479–499; that stretch reads LLGAKIGAPFAAIALWILGAT. Topologically, residues 500-503 are extracellular; sequence AYKH. The chain crosses the membrane as a helical span at residues 504–524; the sequence is IIWVGPASAGLAFGFGMVLIY. At 525–541 the chain is on the cytoplasmic side; the sequence is YSLNNYIIDCYVQYASS. The helical transmembrane segment at 542 to 562 threads the bilayer; that stretch reads ALATKVFLRSAGGAAFPLFTI. The Extracellular portion of the chain corresponds to 563–574; it reads QMYHKLNLHWGS. The helical transmembrane segment at 575-595 threads the bilayer; that stretch reads WLLAFISTAMIALPFAFSYWG. Residues 596 to 614 lie on the Cytoplasmic side of the membrane; it reads KGLRHKLSKKDYSIDSVEM.

Belongs to the major facilitator superfamily. DHA1 family. Polyamines/proton antiporter (TC 2.A.1.2.16) subfamily.

The protein resides in the cell membrane. In terms of biological role, cell membrane polyamine/proton antiporter, involved in the detoxification of excess polyamines in the cytoplasm. Recognizes spermine, but not spermidine. The polypeptide is Polyamine transporter 2 (TPO2) (Saccharomyces cerevisiae (strain ATCC 204508 / S288c) (Baker's yeast)).